The primary structure comprises 214 residues: Adenylate kinase (214 aa).

14 to 19 (GSGKGT) provides a ligand contact to ATP. The segment at 34 to 63 (SSGDLFRSAIKSATPLGSKAAEYINKGLLV) is NMP. Residues Ser35, Arg40, 61-63 (LLV), 89-92 (GFPR), and Gln96 contribute to the AMP site. The interval 130 to 163 (SRFICPACNYVYNQSQGFKECPTCHVALIRRSDD) is LID. Residue Arg131 participates in ATP binding. Zn(2+) contacts are provided by Cys134 and Cys137. 140-141 (VY) is a binding site for ATP. Cys150 and Cys153 together coordinate Zn(2+). Residues Arg160 and Arg171 each coordinate AMP. Thr199 contributes to the ATP binding site.

It belongs to the adenylate kinase family. In terms of assembly, monomer.

It localises to the cytoplasm. It carries out the reaction AMP + ATP = 2 ADP. It participates in purine metabolism; AMP biosynthesis via salvage pathway; AMP from ADP: step 1/1. Functionally, catalyzes the reversible transfer of the terminal phosphate group between ATP and AMP. Plays an important role in cellular energy homeostasis and in adenine nucleotide metabolism. This Chlamydia caviae (strain ATCC VR-813 / DSM 19441 / 03DC25 / GPIC) (Chlamydophila caviae) protein is Adenylate kinase.